Here is a 311-residue protein sequence, read N- to C-terminus: Aspartate carbamoyltransferase catalytic subunit (311 aa).

Residues Arg55 and Thr56 each coordinate carbamoyl phosphate. L-aspartate is bound at residue Lys85. Positions 106, 135, and 138 each coordinate carbamoyl phosphate. Residues Arg168 and Arg230 each contribute to the L-aspartate site. Leu268 and Pro269 together coordinate carbamoyl phosphate.

Belongs to the aspartate/ornithine carbamoyltransferase superfamily. ATCase family. Heterododecamer (2C3:3R2) of six catalytic PyrB chains organized as two trimers (C3), and six regulatory PyrI chains organized as three dimers (R2).

It catalyses the reaction carbamoyl phosphate + L-aspartate = N-carbamoyl-L-aspartate + phosphate + H(+). The protein operates within pyrimidine metabolism; UMP biosynthesis via de novo pathway; (S)-dihydroorotate from bicarbonate: step 2/3. Catalyzes the condensation of carbamoyl phosphate and aspartate to form carbamoyl aspartate and inorganic phosphate, the committed step in the de novo pyrimidine nucleotide biosynthesis pathway. In Salmonella paratyphi C (strain RKS4594), this protein is Aspartate carbamoyltransferase catalytic subunit.